The following is a 298-amino-acid chain: Pyridoxal kinase PdxY (298 aa).

Ser-17 contacts substrate. Residues Asp-119 and Glu-156 each contribute to the ATP site. Asp-234 is a binding site for substrate.

The protein belongs to the pyridoxine kinase family. PdxY subfamily. In terms of assembly, homodimer. Mg(2+) is required as a cofactor.

It carries out the reaction pyridoxal + ATP = pyridoxal 5'-phosphate + ADP + H(+). Its pathway is cofactor metabolism; pyridoxal 5'-phosphate salvage; pyridoxal 5'-phosphate from pyridoxal: step 1/1. In terms of biological role, pyridoxal kinase involved in the salvage pathway of pyridoxal 5'-phosphate (PLP). Catalyzes the phosphorylation of pyridoxal to PLP. This is Pyridoxal kinase PdxY from Deinococcus radiodurans (strain ATCC 13939 / DSM 20539 / JCM 16871 / CCUG 27074 / LMG 4051 / NBRC 15346 / NCIMB 9279 / VKM B-1422 / R1).